The primary structure comprises 368 residues: Histidinol-phosphate aminotransferase (368 aa).

N6-(pyridoxal phosphate)lysine is present on lysine 224.

It belongs to the class-II pyridoxal-phosphate-dependent aminotransferase family. Histidinol-phosphate aminotransferase subfamily. As to quaternary structure, homodimer. Pyridoxal 5'-phosphate is required as a cofactor.

The enzyme catalyses L-histidinol phosphate + 2-oxoglutarate = 3-(imidazol-4-yl)-2-oxopropyl phosphate + L-glutamate. Its pathway is amino-acid biosynthesis; L-histidine biosynthesis; L-histidine from 5-phospho-alpha-D-ribose 1-diphosphate: step 7/9. The sequence is that of Histidinol-phosphate aminotransferase from Agrobacterium fabrum (strain C58 / ATCC 33970) (Agrobacterium tumefaciens (strain C58)).